We begin with the raw amino-acid sequence, 203 residues long: AFG2-interacting ribosome maturation factor (203 aa).

In terms of assembly, part of the 55LCC heterohexameric ATPase complex composed at least of AIRIM, AFG2A, AFG2B and CINP. Does not associate with pre-60S ribosomal particles. In terms of processing, phosphorylated on serines by CK2 kinase.

The protein localises to the nucleus. It is found in the cytoplasm. In terms of biological role, part of the 55LCC heterohexameric ATPase complex which is chromatin-associated and promotes replisome proteostasis to maintain replication fork progression and genome stability. Required for replication fork progression, sister chromatid cohesion, and chromosome stability. The ATPase activity is specifically enhanced by replication fork DNA and is coupled to cysteine protease-dependent cleavage of replisome substrates in response to replication fork damage. Uses ATPase activity to process replisome substrates in S-phase, facilitating their proteolytic turnover from chromatin to ensure DNA replication and mitotic fidelity. Involved in the cytoplasmic maturation steps of pre-60S ribosomal particles by promoting the release of shuttling protein RSL24D1/RLP24 from the pre-ribosomal particles. In Homo sapiens (Human), this protein is AFG2-interacting ribosome maturation factor.